The sequence spans 322 residues: uncharacterized protein (322 aa).

2 disordered regions span residues 1 to 51 (MARS…GAWA) and 107 to 130 (QERQNVEGGPEGLHLEPGNEDRPD). Residues 119 to 130 (LHLEPGNEDRPD) are compositionally biased toward basic and acidic residues.

In terms of tissue distribution, expressed in skin and fetal lung.

This is an uncharacterized protein from Homo sapiens (Human).